The following is a 1909-amino-acid chain: Receptor-type tyrosine-protein phosphatase F (1909 aa).

The first 31 residues, 1 to 31 (MVPNTCTSVPLLPVGLPLLLLLSCIQFSSQA), serve as a signal peptide directing secretion. At 32–1266 (DSLPNFVRSP…RSVDQPEMLW (1235 aa)) the chain is on the extracellular side. Ig-like C2-type domains follow at residues 35–125 (PNFV…AKLT), 137–225 (PTID…ANLY), and 233–315 (PRFS…AQVS). A disulfide bridge links C56 with C109. Residue 68–77 (WMKKGKKVSS) participates in heparin binding. N-linked (GlcNAc...) asparagine glycosylation is present at N119. The cysteines at positions 158 and 208 are disulfide-linked. Residues N251 and N296 are each glycosylated (N-linked (GlcNAc...) asparagine). C254 and C299 form a disulfide bridge. Fibronectin type-III domains are found at residues 322–412 (PPTS…TGEQ), 417–511 (PPLH…TQQG), 515–604 (QPSS…TAQS), 609–706 (PPQD…TNED), 711–819 (PPRK…TTGA), 820–914 (VPGK…PEDV), 918–1013 (FPLN…TSPA), and 1014–1098 (FATS…TAPD). The tract at residues 399–418 (GPPSEPVETRTGEQAPSSPP) is disordered. N721 carries an N-linked (GlcNAc...) asparagine glycan. N-linked (GlcNAc...) asparagine glycosylation is found at N963 and N966. A helical membrane pass occupies residues 1267 to 1287 (VMGPVLAVVLIIIIVIAILLF). Over 1288–1909 (KRKRASPLPK…YLGSFDHYAT (622 aa)) the chain is Cytoplasmic. 2 consecutive Tyrosine-protein phosphatase domains span residues 1354-1609 (FSQE…LLEA) and 1641-1900 (MELE…ALEY). Residues D1518, 1550–1556 (CSAGVGR), and Q1594 contribute to the substrate site. C1550 serves as the catalytic Phosphocysteine intermediate. C1841 functions as the Phosphocysteine intermediate in the catalytic mechanism.

It belongs to the protein-tyrosine phosphatase family. Receptor class 2A subfamily.

It localises to the membrane. It catalyses the reaction O-phospho-L-tyrosyl-[protein] + H2O = L-tyrosyl-[protein] + phosphate. Functionally, possible cell adhesion receptor. It possesses an intrinsic protein tyrosine phosphatase activity (PTPase). Its function is as follows. The first PTPase domain has enzymatic activity, while the second one seems to affect the substrate specificity of the first one. The polypeptide is Receptor-type tyrosine-protein phosphatase F (ptprf) (Danio rerio (Zebrafish)).